The chain runs to 368 residues: 7,8-didemethyl-8-hydroxy-5-deazariboflavin synthase (368 aa).

The Radical SAM core domain maps to 36–272; sequence LSYCRNVFLP…EEVSVQVPPN (237 aa). [4Fe-4S] cluster-binding residues include C50, C54, and C57.

The protein belongs to the radical SAM superfamily. CofG family. Consists of two subunits, CofG and CofH. [4Fe-4S] cluster is required as a cofactor.

The catalysed reaction is 5-amino-5-(4-hydroxybenzyl)-6-(D-ribitylimino)-5,6-dihydrouracil + S-adenosyl-L-methionine = 7,8-didemethyl-8-hydroxy-5-deazariboflavin + 5'-deoxyadenosine + L-methionine + NH4(+) + H(+). It participates in cofactor biosynthesis; coenzyme F0 biosynthesis. Functionally, catalyzes the radical-mediated synthesis of 7,8-didemethyl-8-hydroxy-5-deazariboflavin from 5-amino-5-(4-hydroxybenzyl)-6-(D-ribitylimino)-5,6-dihydrouracil. This is 7,8-didemethyl-8-hydroxy-5-deazariboflavin synthase from Haloarcula marismortui (strain ATCC 43049 / DSM 3752 / JCM 8966 / VKM B-1809) (Halobacterium marismortui).